A 79-amino-acid chain; its full sequence is Sec-independent protein translocase protein TatA (79 aa).

A helical transmembrane segment spans residues M1–F21. Positions E48–S79 are disordered. Positions K66–S79 are enriched in basic and acidic residues.

Belongs to the TatA/E family. In terms of assembly, the Tat system comprises two distinct complexes: a TatABC complex, containing multiple copies of TatA, TatB and TatC subunits, and a separate TatA complex, containing only TatA subunits. Substrates initially bind to the TatABC complex, which probably triggers association of the separate TatA complex to form the active translocon.

It is found in the cell inner membrane. In terms of biological role, part of the twin-arginine translocation (Tat) system that transports large folded proteins containing a characteristic twin-arginine motif in their signal peptide across membranes. TatA could form the protein-conducting channel of the Tat system. This is Sec-independent protein translocase protein TatA from Helicobacter pylori (strain Shi470).